The sequence spans 148 residues: MVTGKQTELIPIPFPPYQIPYSSKFTDSPAFIYFVAAFSVAGLYSIITSLLSGLALLKPGYAKQLVSHFVVVDVLLLGIVAAAIGAAGGVGYIGLRGNSHSRWTKICNIYDTFCQHLAGSIAAGLIASIVLVLLILLSFFTLSRKIPK.

A run of 3 helical transmembrane segments spans residues 31–51 (FIYF…TSLL), 74–94 (VLLL…GYIG), and 121–141 (IAAG…SFFT).

Belongs to the Casparian strip membrane proteins (CASP) family. In terms of assembly, homodimer and heterodimers.

The protein resides in the cell membrane. This is CASP-like protein 1 from Panax ginseng (Korean ginseng).